A 207-amino-acid polypeptide reads, in one-letter code: MPKVALYNQNGSTAGDIELNDSVFGIEPNESVVFDAILMQRASLRQGTHKVKNRSEVRGGGRKPWRQKGTGRARQGSIRSPQWRGGGIVFGPTPRSYAYKLPKKVRRLAIKSALSSKVNDNNLIVLEDLNLDAVKTKEMAAILKGLSIEKKALIVTADANETVELSARNLPGVTVVEANGINVLDVVGHEKLVMTKAAVEKVEEVLA.

The tract at residues Thr-48–Gly-86 is disordered. The segment covering Gly-60–Gly-71 has biased composition (basic residues).

The protein belongs to the universal ribosomal protein uL4 family. As to quaternary structure, part of the 50S ribosomal subunit.

In terms of biological role, one of the primary rRNA binding proteins, this protein initially binds near the 5'-end of the 23S rRNA. It is important during the early stages of 50S assembly. It makes multiple contacts with different domains of the 23S rRNA in the assembled 50S subunit and ribosome. Its function is as follows. Forms part of the polypeptide exit tunnel. The protein is Large ribosomal subunit protein uL4 of Bacillus licheniformis (strain ATCC 14580 / DSM 13 / JCM 2505 / CCUG 7422 / NBRC 12200 / NCIMB 9375 / NCTC 10341 / NRRL NRS-1264 / Gibson 46).